A 404-amino-acid chain; its full sequence is Probable tRNA sulfurtransferase (404 aa).

The THUMP domain occupies E60–T165. ATP is bound by residues M183–L184, H208–F209, R265, G287, and Q296.

Belongs to the ThiI family.

It localises to the cytoplasm. It catalyses the reaction [ThiI sulfur-carrier protein]-S-sulfanyl-L-cysteine + a uridine in tRNA + 2 reduced [2Fe-2S]-[ferredoxin] + ATP + H(+) = [ThiI sulfur-carrier protein]-L-cysteine + a 4-thiouridine in tRNA + 2 oxidized [2Fe-2S]-[ferredoxin] + AMP + diphosphate. The catalysed reaction is [ThiS sulfur-carrier protein]-C-terminal Gly-Gly-AMP + S-sulfanyl-L-cysteinyl-[cysteine desulfurase] + AH2 = [ThiS sulfur-carrier protein]-C-terminal-Gly-aminoethanethioate + L-cysteinyl-[cysteine desulfurase] + A + AMP + 2 H(+). It functions in the pathway cofactor biosynthesis; thiamine diphosphate biosynthesis. In terms of biological role, catalyzes the ATP-dependent transfer of a sulfur to tRNA to produce 4-thiouridine in position 8 of tRNAs, which functions as a near-UV photosensor. Also catalyzes the transfer of sulfur to the sulfur carrier protein ThiS, forming ThiS-thiocarboxylate. This is a step in the synthesis of thiazole, in the thiamine biosynthesis pathway. The sulfur is donated as persulfide by IscS. The protein is Probable tRNA sulfurtransferase of Enterococcus faecalis (strain ATCC 700802 / V583).